A 93-amino-acid polypeptide reads, in one-letter code: Hematopoietic cell signal transducer (93 aa).

The signal sequence occupies residues 1-18; the sequence is MIHLGHILFLLLLPVAAA. Residues 19–48 are Extracellular-facing; it reads QTTPGERSSLPAFYPGTSGSCSGCGSLSLP. A helical transmembrane segment spans residues 49–69; that stretch reads LLAGLVAADAVASLLIVGAVF. At 70-93 the chain is on the cytoplasmic side; that stretch reads LCARPRRSPAQEDGKVYINMPGRG. Y86 carries the post-translational modification Phosphotyrosine. Residues 86-88 form a GRB2 binding site region; it reads YIN. A PIK3R1 binding site region spans residues 86–89; it reads YINM.

The protein belongs to the DAP10 family. As to quaternary structure, interacts with CLEC5A. Forms an CLEC5A/TYROBP/HCST trimolecular complex depending almost solely on TYROBP. Homodimer; Disulfide-linked. Heterohexamer composed of four subunits of HCST/DAP10 and two subunits of KLRK1. Interacts (via transmembrane domain) with KLRK1 (via transmembrane domain); the interaction is required for KLRK1 NK cell surface and induces NK cell-mediated cytotoxicity. Interacts with PIK3R1 and GRB2. Interacts with CD300H. Phosphorylated; PIK3R1 and GRB2 associate specifically with tyrosine-phosphorylated HCST. Post-translationally, O-glycosylated. As to expression, predominantly expressed in hemopoietic cells such as NK cells, subset of T-cells and monocytes. Detected in leukocytes, spleen, and thymus.

The protein resides in the membrane. Its function is as follows. Transmembrane adapter protein which associates with KLRK1 to form an activation receptor KLRK1-HCST in lymphoid and myeloid cells; this receptor plays a major role in triggering cytotoxicity against target cells expressing cell surface ligands such as MHC class I chain-related MICA and MICB, and UL16-binding proteins (ULBPs); these ligands are up-regulated by stress conditions and pathological state such as viral infection and tumor transformation. Functions as a docking site for PI3-kinase PIK3R1 and GRB2. Interaction of ULBPs with KLRK1-HCST triggers calcium mobilization and activation of the PIK3R1, MAP2K/ERK, and JAK2/STAT5 signaling pathways. Both PIK3R1 and GRB2 are required for full KLRK1-HCST-mediated activation and ultimate killing of target cells. In NK cells, KLRK1-HCST signaling directly induces cytotoxicity and enhances cytokine production initiated via DAP12/TYROBP-associated receptors. In T-cells, it provides primarily costimulation for TCR-induced signals. KLRK1-HCST receptor plays a role in immune surveillance against tumors and is required for cytolysis of tumors cells; indeed, melanoma cells that do not express KLRK1 ligands escape from immune surveillance mediated by NK cells. The protein is Hematopoietic cell signal transducer (HCST) of Homo sapiens (Human).